Consider the following 181-residue polypeptide: Trans-acting factor D (181 aa).

Functionally, plays a role in 2-micron plasmid partitioning. Antagonizes transcriptional repression of recombinase FLP by REP1-REP2. Regulates both stability and copy number of the plasmid by blocking the formation of the REP1-REP2 repressor complex. The chain is Trans-acting factor D from Saccharomyces cerevisiae (strain ATCC 204508 / S288c) (Baker's yeast).